Reading from the N-terminus, the 976-residue chain is Poly(ADP-ribose) glycohydrolase (976 aa).

An N-acetylmethionine modification is found at Met1. Residues 1 to 69 (MNAGPGCEPC…GRAGQHRGSA (69 aa)) form a disordered region. An A-domain region spans residues 1-456 (MNAGPGCEPC…LSPDKKWLGT (456 aa)). Residues 10-16 (CTKRPRW) carry the Nuclear localization signal motif. Ser22 carries the post-translational modification Phosphoserine. Residues 37–46 (RVLDPKDAHV) are compositionally biased toward basic and acidic residues. A Phosphoserine modification is found at Ser68. The PIP-box (PCNA interacting peptide) signature appears at 76-83 (QKTITSWM). A phosphoserine mark is found at Ser133 and Ser137. Position 139 is a phosphothreonine (Thr139). The segment at 183–350 (SNANIDRSPQ…PSRFQARDAD (168 aa)) is disordered. 2 stretches are compositionally biased toward basic and acidic residues: residues 191–206 (PQND…ENRD) and 222–233 (TTEDEQAREAKS). Residue Ser197 is modified to Phosphoserine. Phosphothreonine is present on Thr199. 7 positions are modified to phosphoserine: Ser261, Ser264, Ser286, Ser291, Ser298, Ser302, and Ser316. A compositionally biased stretch (acidic residues) spans 316-331 (SEADEETSPGFDEQED). Over residues 332–342 (GSSSQTANKPS) the composition is skewed to polar residues. Lys340 is modified (N6-acetyllysine). Ser448 carries the post-translational modification Phosphoserine. The catalytic stretch occupies residues 610-795 (QPIPLLKQKM…TEQYSEYTGY (186 aa)). 726–727 (IE) serves as a coordination point for substrate. The active site involves Asp737. The substrate site is built by Asn740 and Gln754. Residues Glu755 and Glu756 contribute to the active site. Residues Tyr795 and 869 to 874 (NWGCGA) contribute to the substrate site.

The protein belongs to the poly(ADP-ribose) glycohydrolase family. As to quaternary structure, interacts with PCNA. Interacts with NUDT5. Ubiquitously expressed.

It is found in the nucleus. The protein resides in the cytoplasm. It localises to the mitochondrion. The protein localises to the mitochondrion matrix. The catalysed reaction is [(1''-&gt;2')-ADP-alpha-D-ribose](n) + H2O = [(1''-&gt;2')-ADP-alpha-D-ribose](n-1) + ADP-D-ribose. Functionally, poly(ADP-ribose) glycohydrolase that degrades poly(ADP-ribose) by hydrolyzing the ribose-ribose bonds present in poly(ADP-ribose). PARG acts both as an endo- and exoglycosidase, releasing poly(ADP-ribose) of different length as well as ADP-ribose monomers. It is however unable to cleave the ester bond between the terminal ADP-ribose and ADP-ribosylated residues, leaving proteins that are mono-ADP-ribosylated. Poly(ADP-ribose) is synthesized after DNA damage is only present transiently and is rapidly degraded by PARG. Required to prevent detrimental accumulation of poly(ADP-ribose) upon prolonged replicative stress, while it is not required for recovery from transient replicative stress. Responsible for the prevalence of mono-ADP-ribosylated proteins in cells, thanks to its ability to degrade poly(ADP-ribose) without cleaving the terminal protein-ribose bond. Required for retinoid acid-dependent gene transactivation, probably by removing poly(ADP-ribose) from histone demethylase KDM4D, allowing chromatin derepression at RAR-dependent gene promoters. Involved in the synthesis of ATP in the nucleus, together with PARP1, NMNAT1 and NUDT5. Nuclear ATP generation is required for extensive chromatin remodeling events that are energy-consuming. The chain is Poly(ADP-ribose) glycohydrolase from Homo sapiens (Human).